A 77-amino-acid polypeptide reads, in one-letter code: Chassatide C13 (77 aa).

An N-terminal signal peptide occupies residues 1-24; the sequence is MAKFATQLLLFVLIASLVMLEVHA. A propeptide spans 25 to 44 (removed in mature form); sequence SNTFQVPDLGKRLLMNRDPN. The segment at residues 45 to 75 is a cross-link (cyclopeptide (Gly-Asn)); the sequence is GFPCAESCVYIPCTVTALLGCSCRNRVCYRN. Cystine bridges form between Cys-48/Cys-65, Cys-52/Cys-67, and Cys-57/Cys-72. A propeptide spans 76 to 77 (removed in mature form); that stretch reads EL.

This is a cyclic peptide. As to expression, expressed in fruit and pedicel but not in root, leaf and stem (at protein level).

In terms of biological role, probably participates in a plant defense mechanism. The sequence is that of Chassatide C13 from Chassalia chartacea (Chassalia curviflora).